The sequence spans 358 residues: tRNA-specific 2-thiouridylase MnmA 2 (358 aa).

Residues 11 to 18 and methionine 37 each bind ATP; that span reads GMSGGVDS. Residue cysteine 106 is the Nucleophile of the active site. Cysteine 106 and cysteine 202 form a disulfide bridge. ATP is bound at residue glycine 130. Residues 152-154 are interaction with tRNA; it reads KDQ. Residue cysteine 202 is the Cysteine persulfide intermediate of the active site. The interaction with tRNA stretch occupies residues 308 to 309; the sequence is RY.

This sequence belongs to the MnmA/TRMU family.

Its subcellular location is the cytoplasm. The enzyme catalyses S-sulfanyl-L-cysteinyl-[protein] + uridine(34) in tRNA + AH2 + ATP = 2-thiouridine(34) in tRNA + L-cysteinyl-[protein] + A + AMP + diphosphate + H(+). Functionally, catalyzes the 2-thiolation of uridine at the wobble position (U34) of tRNA, leading to the formation of s(2)U34. The protein is tRNA-specific 2-thiouridylase MnmA 2 of Clostridium tetani (strain Massachusetts / E88).